A 360-amino-acid chain; its full sequence is WD repeat domain phosphoinositide-interacting protein 4 (360 aa).

WD repeat units lie at residues 1–34 (MTQQ…IYNV), 40–84 (KGHL…IWDD), 92–128 (KEKL…VYSF), 133–174 (RKLF…LVDL), 183–222 (SAPF…LFDT), 227–266 (KLVE…IFAL), and 284–329 (GPMI…ICVD). The short motif at 231-234 (LRRG) is the L/FRRG motif element.

This sequence belongs to the WD repeat PROPPIN family. Interacts with WIPI1. Interacts with WIPI2. Interacts with ATG2A and ATG2B. Interacts with ULK1. May interact with the PRKAA1, PRKAA2, PRKAB1 and PRKAG1 subunits of the AMPK kinase. May interact with NUDC. As to expression, ubiquitously expressed, with high expression in skeletal muscle and heart. Weakly expressed in liver and placenta. Expression is down-regulated in pancreatic and in kidney tumors.

It localises to the preautophagosomal structure. The protein localises to the cytoplasm. With respect to regulation, activated upon amino-acid starvation. Component of the autophagy machinery that controls the major intracellular degradation process by which cytoplasmic materials are packaged into autophagosomes and delivered to lysosomes for degradation. Binds phosphatidylinositol 3-phosphate (PtdIns3P). Activated by the STK11/AMPK signaling pathway upon starvation, WDR45 is involved in autophagosome assembly downstream of WIPI2, regulating the size of forming autophagosomes. Together with WIPI1, promotes ATG2 (ATG2A or ATG2B)-mediated lipid transfer by enhancing ATG2-association with phosphatidylinositol 3-monophosphate (PI3P)-containing membranes. Probably recruited to membranes through its PtdIns3P activity. This chain is WD repeat domain phosphoinositide-interacting protein 4 (WDR45), found in Homo sapiens (Human).